The sequence spans 282 residues: Biotin synthase (282 aa).

In terms of domain architecture, Radical SAM core spans 1–230 (MSDNKIYLCA…NQMLMIAGGR (230 aa)). [4Fe-4S] cluster-binding residues include cysteine 19, cysteine 23, and cysteine 26. 3 residues coordinate [2Fe-2S] cluster: cysteine 63, cysteine 98, and cysteine 156.

It belongs to the radical SAM superfamily. Biotin synthase family. As to quaternary structure, homodimer. [4Fe-4S] cluster is required as a cofactor. The cofactor is [2Fe-2S] cluster.

The catalysed reaction is (4R,5S)-dethiobiotin + (sulfur carrier)-SH + 2 reduced [2Fe-2S]-[ferredoxin] + 2 S-adenosyl-L-methionine = (sulfur carrier)-H + biotin + 2 5'-deoxyadenosine + 2 L-methionine + 2 oxidized [2Fe-2S]-[ferredoxin]. Its pathway is cofactor biosynthesis; biotin biosynthesis; biotin from 7,8-diaminononanoate: step 2/2. In terms of biological role, catalyzes the conversion of dethiobiotin (DTB) to biotin by the insertion of a sulfur atom into dethiobiotin via a radical-based mechanism. The protein is Biotin synthase of Aliarcobacter butzleri (strain RM4018) (Arcobacter butzleri).